The chain runs to 443 residues: Sensor histidine protein kinase HK06 (443 aa).

2 helical membrane passes run phenylalanine 16–phenylalanine 36 and isoleucine 140–serine 160. The 53-residue stretch at lysine 165–histidine 217 folds into the HAMP domain. Positions glycine 239–leucine 443 constitute a Histidine kinase domain. Histidine 242 carries the post-translational modification Phosphohistidine; by autocatalysis.

It localises to the cell membrane. It carries out the reaction ATP + protein L-histidine = ADP + protein N-phospho-L-histidine.. In terms of biological role, member of the two-component regulatory system HK06/RR06 involved in regulation of target genes, including choline-binding protein CbpA. Has been shown in one study to not be required for regulation of expression of choline-binding protein CbpA. The polypeptide is Sensor histidine protein kinase HK06 (Streptococcus pneumoniae serotype 2 (strain D39 / NCTC 7466)).